Consider the following 208-residue polypeptide: MDDNLQLADGGFTKNVARSGRRARQSAEMMSAEDSRQRRSSSSISTAAEGPPPKPTRRQGGWAEESSTTTNVRSGRRAAAEEPEDRRLRPQTPEGSDNESGEDIPVIPDLEEVQEEDLTMQIAAPPSVQVNRVMTYRDLDNDLMKFSAFQTLDGEIDLKLLTKVLAPEQEVREEDVGWDWDHLEVSSELQSEWDEGDREDQSPLPVCV.

Disordered regions lie at residues 1-105 and 187-208; these read MDDN…EDIP and SELQ…PVCV. The span at 78-88 shows a compositional bias: basic and acidic residues; that stretch reads AAAEEPEDRRL.

The protein belongs to the IFT43 family. Component of the IFT complex A (IFT-A) complex.

Its subcellular location is the cytoplasm. The protein localises to the cytoskeleton. It localises to the cell projection. The protein resides in the cilium. Its function is as follows. As a component of IFT complex A (IFT-A), a complex required for retrograde ciliary transport and entry into cilia of G protein-coupled receptors (GPCRs), it is involved in ciliogenesis. Involved in retrograde ciliary transport along microtubules from the ciliary tip to the base. The protein is Intraflagellar transport protein 43 homolog (ift43) of Danio rerio (Zebrafish).